We begin with the raw amino-acid sequence, 129 residues long: Small ribosomal subunit protein uS9 (129 aa).

Belongs to the universal ribosomal protein uS9 family.

This Nitratiruptor sp. (strain SB155-2) protein is Small ribosomal subunit protein uS9.